We begin with the raw amino-acid sequence, 198 residues long: Large ribosomal subunit protein uL13 (198 aa).

Belongs to the universal ribosomal protein uL13 family.

The chain is Large ribosomal subunit protein uL13 (RPL13A) from Tetrahymena thermophila (strain SB210).